The chain runs to 2035 residues: Ral GTPase-activating protein subunit alpha-1 (2035 aa).

2 disordered regions span residues 343-384 (LVSR…SSLC) and 477-496 (DGEKREEENGTSTSEHVRNS). Positions 345 to 365 (SREESKNDTVDKVDKSAEPEQ) are enriched in basic and acidic residues. Composition is skewed to polar residues over residues 366–384 (SHSNTSTLTEREPSSSSLC) and 486–496 (GTSTSEHVRNS). S710 and S720 each carry phosphoserine. The tract at residues 714 to 752 (SFSRGWSRDQPGQAPMRQRSATTTGSPGTEKARSIVRQK) is disordered. T753 is subject to Phosphothreonine. Position 772 is a phosphoserine (S772). T777 is modified (phosphothreonine). Position 796 is a phosphoserine (S796). Residues 807–817 (ERAKVNKEDTS) show a composition bias toward basic and acidic residues. Disordered stretches follow at residues 807 to 834 (ERAKVNKEDTSPKLPPLNSETGGNSANV) and 848 to 911 (SGNA…SHSD). Polar residues-rich tracts occupy residues 824-833 (NSETGGNSAN) and 849-862 (GNASTMTRRGSSPG). Phosphoserine is present on residues S859, S860, and S863. Residues 894 to 911 (SPASAGSSDLMSSDSHSD) show a composition bias toward low complexity. Phosphoserine occurs at positions 985, 989, 993, and 999. A compositionally biased stretch (polar residues) spans 986–1008 (ESASPVHSALGSRSQTPSPSTLS). The tract at residues 986–1011 (ESASPVHSALGSRSQTPSPSTLSRAH) is disordered. T1001 is modified (phosphothreonine). Phosphoserine is present on residues S1003 and S1477. The tract at residues 1326–2035 (FTNKTVAHVA…YHHFPADADH (710 aa)) is minimal domain that binds to TCF3/E12. A coiled-coil region spans residues 1713–1748 (SEKQENDVINAILKQYTEEKEFVEKHFNDLNMKASE). The region spanning 1795–2003 (LRNLDSRQCR…EERARYLQTI (209 aa)) is the Rap-GAP domain.

Component of the heterodimeric RalGAP1 complex with RALGAPB. Heterodimerization is required for activity. Interacts with the HLH region of TCF3/isoform E12. Expressed during embryogenesis. Expressed in the adult brain, particularly in neurons of the cortex and hippocampus.

Its subcellular location is the cytoplasm. The protein localises to the nucleus. Its function is as follows. Catalytic subunit of the heterodimeric RalGAP1 complex which acts as a GTPase activator for the Ras-like small GTPases RALA and RALB. May interact with the HLH region of TCF3/isoform E12. In Mus musculus (Mouse), this protein is Ral GTPase-activating protein subunit alpha-1 (Ralgapa1).